The primary structure comprises 451 residues: L,D-transpeptidase 5 (451 aa).

The region spanning 263–384 (QVVKAEVSSH…AVYGDPVEVT (122 aa)) is the L,D-TPase catalytic domain. Substrate-binding positions include Y323 and 337 to 338 (NG). H342 (proton donor/acceptor) is an active-site residue. The active-site Nucleophile is C360. A substrate-binding site is contributed by N362. Residues 417 to 451 (AAKPAATQIPVTAPVTPSDAPTPSGTPTTTNGPGG) are disordered. The span at 437 to 451 (PTPSGTPTTTNGPGG) shows a compositional bias: low complexity.

It functions in the pathway cell wall biogenesis; peptidoglycan biosynthesis. With respect to regulation, in contrast to other LDT paralogs, LdtMt5 is not inactivated by the beta-lactam carbapenems; beta-lactam carbapenems form covalent adducts with other LDT paralogs but the formation of covalent adducts was not detected for LdtMt5. In terms of biological role, generates 3-&gt;3 cross-links in peptidoglycan, catalyzing the cleavage of the mDap(3)-D-Ala(4) bond of a tetrapeptide donor stem and the formation of a bond between the carbonyl of mDap(3) of the donor stem and the side chain of mDap(3) of the acceptor stem. Is specific for donor substrates containing a stem tetrapeptide since it cannot use pentapeptide stems. In Mycobacterium tuberculosis (strain ATCC 25618 / H37Rv), this protein is L,D-transpeptidase 5 (lprQ).